A 144-amino-acid polypeptide reads, in one-letter code: Large ribosomal subunit protein uL11m (144 aa).

Residues 1-32 constitute a mitochondrion transit peptide; the sequence is MASTRTTIIKLIVPAGKATPTPPIGPALGARG.

Belongs to the universal ribosomal protein uL11 family. As to quaternary structure, component of the mitochondrial large ribosomal subunit (mt-LSU). Mature yeast 74S mitochondrial ribosomes consist of a small (37S) and a large (54S) subunit. The 37S small subunit contains a 15S ribosomal RNA (15S mt-rRNA) and at least 32 different proteins. The 54S large subunit contains a 21S rRNA (21S mt-rRNA) and at least 45 different proteins.

It is found in the mitochondrion. The protein resides in the cytoplasm. Functionally, component of the mitochondrial ribosome (mitoribosome), a dedicated translation machinery responsible for the synthesis of mitochondrial genome-encoded proteins, including at least some of the essential transmembrane subunits of the mitochondrial respiratory chain. The mitoribosomes are attached to the mitochondrial inner membrane and translation products are cotranslationally integrated into the membrane. This is Large ribosomal subunit protein uL11m from Schizosaccharomyces pombe (strain 972 / ATCC 24843) (Fission yeast).